A 327-amino-acid polypeptide reads, in one-letter code: Genome polyprotein (327 aa).

The tract at residues 65–102 is disordered; that stretch reads IDAVGDNKKDAKPEQGSIQSNPNKGKEKDVNAGTSGTH.

The protein belongs to the potyviridae genome polyprotein family. In terms of processing, genome polyprotein of potyviruses undergoes post-translational proteolytic processing by the main proteinase NIa-pro resulting in the production of at least ten individual proteins. The P1 proteinase and the HC-pro cleave only their respective C-termini autocatalytically. 6K1 is essential for proper proteolytic separation of P3 from CI.

The protein resides in the virion. The enzyme catalyses RNA(n) + a ribonucleoside 5'-triphosphate = RNA(n+1) + diphosphate. An RNA-dependent RNA polymerase that plays an essential role in the virus replication. Its function is as follows. Involved in aphid transmission, cell-to-cell and systemis movement, encapsidation of the viral RNA and in the regulation of viral RNA amplification. In Potato virus Y (strain Chinese) (PVY), this protein is Genome polyprotein.